We begin with the raw amino-acid sequence, 229 residues long: Cytidylate kinase (229 aa).

10 to 18 (GFSSCGKST) lines the ATP pocket.

It belongs to the cytidylate kinase family. Type 1 subfamily.

Its subcellular location is the cytoplasm. It carries out the reaction CMP + ATP = CDP + ADP. It catalyses the reaction dCMP + ATP = dCDP + ADP. The chain is Cytidylate kinase from Bacteroides fragilis (strain ATCC 25285 / DSM 2151 / CCUG 4856 / JCM 11019 / LMG 10263 / NCTC 9343 / Onslow / VPI 2553 / EN-2).